We begin with the raw amino-acid sequence, 504 residues long: Lysine--tRNA ligase (504 aa).

The short motif at 23–31 (PSGPIHIGN) is the 'HIGH' region element.

Belongs to the class-I aminoacyl-tRNA synthetase family.

It localises to the cytoplasm. The enzyme catalyses tRNA(Lys) + L-lysine + ATP = L-lysyl-tRNA(Lys) + AMP + diphosphate. The polypeptide is Lysine--tRNA ligase (Picrophilus torridus (strain ATCC 700027 / DSM 9790 / JCM 10055 / NBRC 100828 / KAW 2/3)).